A 336-amino-acid chain; its full sequence is MSDEKDIYDLTIIGGGPVGLFAAFYAGIRKAKTKIIDSLPQLGGQLTMLYPEKYIYDIPGFPAIKAGELIANLEKQMQPFQHDVCLEEEVTHLAQEADGLLRLDTTKGTHYSKTVIFAIGNGAFQPRRLAIENVEAFEGESIHYYVTDMKKFAGKKVAIAGGGDSAIDWALMLENVAEEVSIIHRRPQFRGHEHSVEQLEKSSVSIRTPYIISDILKENETFTGIQLTETKGDQTLDLPLDDLIINYGFTSSLTHLKEWGLDVSRNAINVHSDMSTNIPGVYAVGDICSYEGKVKLIATGFGEAPTAVNNALHYLRPDARRQPVHSTSLFENGVPK.

Residues Asp-37, Gln-45, Tyr-50, Val-90, Phe-124, Asp-286, and Thr-327 each contribute to the FAD site.

Belongs to the ferredoxin--NADP reductase type 2 family. Homodimer. It depends on FAD as a cofactor.

It carries out the reaction 2 reduced [2Fe-2S]-[ferredoxin] + NADP(+) + H(+) = 2 oxidized [2Fe-2S]-[ferredoxin] + NADPH. This is Ferredoxin--NADP reductase from Enterococcus faecalis (strain ATCC 700802 / V583).